The following is a 394-amino-acid chain: NAD(P)H-quinone oxidoreductase subunit H (394 aa).

It belongs to the complex I 49 kDa subunit family. As to quaternary structure, NDH-1 can be composed of about 15 different subunits; different subcomplexes with different compositions have been identified which probably have different functions.

The protein resides in the cellular thylakoid membrane. It carries out the reaction a plastoquinone + NADH + (n+1) H(+)(in) = a plastoquinol + NAD(+) + n H(+)(out). It catalyses the reaction a plastoquinone + NADPH + (n+1) H(+)(in) = a plastoquinol + NADP(+) + n H(+)(out). Functionally, NDH-1 shuttles electrons from an unknown electron donor, via FMN and iron-sulfur (Fe-S) centers, to quinones in the respiratory and/or the photosynthetic chain. The immediate electron acceptor for the enzyme in this species is believed to be plastoquinone. Couples the redox reaction to proton translocation, and thus conserves the redox energy in a proton gradient. Cyanobacterial NDH-1 also plays a role in inorganic carbon-concentration. The polypeptide is NAD(P)H-quinone oxidoreductase subunit H (Picosynechococcus sp. (strain ATCC 27264 / PCC 7002 / PR-6) (Agmenellum quadruplicatum)).